The sequence spans 424 residues: Enolase (424 aa).

Gln-163 lines the (2R)-2-phosphoglycerate pocket. Glu-205 (proton donor) is an active-site residue. Mg(2+) contacts are provided by Asp-242, Glu-285, and Asp-312. (2R)-2-phosphoglycerate is bound by residues Lys-337, Arg-366, Ser-367, and Lys-388. Lys-337 acts as the Proton acceptor in catalysis.

It belongs to the enolase family. Mg(2+) is required as a cofactor.

Its subcellular location is the cytoplasm. The protein resides in the secreted. The protein localises to the cell surface. The catalysed reaction is (2R)-2-phosphoglycerate = phosphoenolpyruvate + H2O. It functions in the pathway carbohydrate degradation; glycolysis; pyruvate from D-glyceraldehyde 3-phosphate: step 4/5. Its function is as follows. Catalyzes the reversible conversion of 2-phosphoglycerate (2-PG) into phosphoenolpyruvate (PEP). It is essential for the degradation of carbohydrates via glycolysis. The chain is Enolase from Roseobacter denitrificans (strain ATCC 33942 / OCh 114) (Erythrobacter sp. (strain OCh 114)).